Reading from the N-terminus, the 909-residue chain is Myb-like protein Q (909 aa).

Disordered stretches follow at residues 15-65 (TTNN…QQQQ), 84-149 (QQQN…QQIL), and 216-280 (SAPS…KGPW). A compositionally biased stretch (low complexity) spans 17 to 46 (NNNSNNNNNNNNNNNNNNNNNNNNNINQNH). The span at 47–56 (QHQHQHHHHQ) shows a compositional bias: basic residues. A compositionally biased stretch (low complexity) spans 84 to 126 (QQQNYGESTTSTSMIPPSITTSLTPLTPTLSSQPQNIQQQQQQ). Residues 127–139 (QHHHQQQHHHHHQ) are compositionally biased toward basic residues. A compositionally biased stretch (polar residues) spans 216-226 (SAPSTPLSMSP). HTH myb-type domains are found at residues 272-327 (SPGI…SPEV) and 328-378 (RKTN…LKKI). DNA-binding regions (H-T-H motif) lie at residues 300 to 323 (WSSI…FNHL) and 351 to 374 (WTAI…NSTL). Residues 379 to 389 (GGDSKSLNKEK) show a composition bias toward basic and acidic residues. Disordered stretches follow at residues 379–482 (GGDS…NTAI), 497–531 (QTTP…QTQQ), 616–642 (SMEQ…QQQQ), 672–748 (YQQQ…HPIE), and 826–855 (LNTT…IPTP). Over residues 390–401 (DDDDDDDEDAED) the composition is skewed to acidic residues. Low complexity-rich tracts occupy residues 415 to 431 (SSSS…TNSS) and 444 to 482 (STTT…NTAI). Residues 497–508 (QTTPNSSPSLSS) are compositionally biased toward polar residues. Composition is skewed to low complexity over residues 622–642 (YQQQ…QQQQ), 672–726 (YQQQ…QQQQ), 733–744 (NSNNTDTTFSNS), and 826–851 (LNTT…NNNN).

The protein localises to the nucleus. This Dictyostelium discoideum (Social amoeba) protein is Myb-like protein Q (mybQ).